The sequence spans 501 residues: L-arabinose isomerase (501 aa).

Mn(2+)-binding residues include Glu-306, Glu-333, His-350, and His-449.

It belongs to the arabinose isomerase family. Mn(2+) serves as cofactor.

The catalysed reaction is beta-L-arabinopyranose = L-ribulose. The protein operates within carbohydrate degradation; L-arabinose degradation via L-ribulose; D-xylulose 5-phosphate from L-arabinose (bacterial route): step 1/3. In terms of biological role, catalyzes the conversion of L-arabinose to L-ribulose. The chain is L-arabinose isomerase from Herpetosiphon aurantiacus (strain ATCC 23779 / DSM 785 / 114-95).